We begin with the raw amino-acid sequence, 166 residues long: Putative 4-hydroxy-4-methyl-2-oxoglutarate aldolase 1 (166 aa).

Position 2 is an N-acetylalanine (A2). Substrate-binding positions include 81–84 and R103; that span reads GGNP. D104 is a binding site for a divalent metal cation.

The protein belongs to the class II aldolase/RraA-like family. In terms of assembly, homotrimer. The cofactor is a divalent metal cation.

It carries out the reaction 4-hydroxy-4-methyl-2-oxoglutarate = 2 pyruvate. It catalyses the reaction oxaloacetate + H(+) = pyruvate + CO2. Catalyzes the aldol cleavage of 4-hydroxy-4-methyl-2-oxoglutarate (HMG) into 2 molecules of pyruvate. Also contains a secondary oxaloacetate (OAA) decarboxylase activity due to the common pyruvate enolate transition state formed following C-C bond cleavage in the retro-aldol and decarboxylation reactions. The protein is Putative 4-hydroxy-4-methyl-2-oxoglutarate aldolase 1 of Arabidopsis thaliana (Mouse-ear cress).